A 125-amino-acid chain; its full sequence is Small ribosomal subunit protein bS6 (125 aa).

This sequence belongs to the bacterial ribosomal protein bS6 family.

Binds together with bS18 to 16S ribosomal RNA. This is Small ribosomal subunit protein bS6 from Baumannia cicadellinicola subsp. Homalodisca coagulata.